Reading from the N-terminus, the 115-residue chain is NADH-ubiquinone oxidoreductase chain 3 (115 aa).

A run of 3 helical transmembrane segments spans residues 4 to 24 (FMAL…AFWL), 55 to 75 (FFLV…LLPL), and 87 to 107 (MMLT…YEWV).

Belongs to the complex I subunit 3 family. Core subunit of respiratory chain NADH dehydrogenase (Complex I) which is composed of 45 different subunits. Interacts with TMEM186. Interacts with TMEM242.

Its subcellular location is the mitochondrion inner membrane. The enzyme catalyses a ubiquinone + NADH + 5 H(+)(in) = a ubiquinol + NAD(+) + 4 H(+)(out). Functionally, core subunit of the mitochondrial membrane respiratory chain NADH dehydrogenase (Complex I) which catalyzes electron transfer from NADH through the respiratory chain, using ubiquinone as an electron acceptor. Essential for the catalytic activity of complex I. The chain is NADH-ubiquinone oxidoreductase chain 3 from Osgoodomys banderanus (Michoacan deer mouse).